An 86-amino-acid polypeptide reads, in one-letter code: Cell division topological specificity factor (86 aa).

Belongs to the MinE family.

Functionally, prevents the cell division inhibition by proteins MinC and MinD at internal division sites while permitting inhibition at polar sites. This ensures cell division at the proper site by restricting the formation of a division septum at the midpoint of the long axis of the cell. This chain is Cell division topological specificity factor, found in Parasynechococcus marenigrum (strain WH8102).